The primary structure comprises 910 residues: Protein CHROMATIN REMODELING 25 (910 aa).

Composition is skewed to acidic residues over residues 1–18 and 26–39; these read MEEE…DDSS and QDSE…ECED. The tract at residues 1 to 39 is disordered; that stretch reads MEEEDEEILSSSDCDDSSDSYKDDSQDSEGENDNPECED. The Helicase ATP-binding domain occupies 198–371; that stretch reads LHGSANINGC…FAMVNFTNPG (174 aa). ATP is bound at residue 211-218; the sequence is DDMGLGKT. Residues 322-325 carry the DEAH box motif; that stretch reads DEAH. Positions 396–417 form a coiled coil; it reads TEEEKNLAADRSAELSSKVNQF. The region spanning 538–696 is the Helicase C-terminal domain; it reads VLSRLLANLR…QTDNSTRQGN (159 aa). The disordered stretch occupies residues 828 to 861; that stretch reads VSPKTVESEEHNRNQPVNKRAFNKPQQRPREPLQ.

This sequence belongs to the SNF2/RAD54 helicase family. In terms of assembly, interacts with RAD51. Binds to the geminivirus mungbean yellow mosaic virus (MYMV) and to the tomato leaf curl virus (ToLCV) replication-associated proteins. As to expression, expressed ubiquitously, with the highest levels of expression in flower buds. Present in flower buds (at protein level).

The protein localises to the nucleus. Dissociates RAD51 from nucleoprotein filaments formed on dsDNA. Could be involved in the turnover of RAD51 protein-dsDNA filaments. Addition of RAD54 overcomes inhibition of DNA strand exchange by RAD51 bound to substrate dsDNA. Species preference in the RAD51 dissociation and DNA strand exchange assays underlines the importance of specific RAD54-RAD51 interactions. RAD51 is unable to release dsDNA upon ATP hydrolysis, leaving it stuck on the heteroduplex DNA product after DNA strand exchange. Involved in DNA repair and mitotic recombination. Functions in the homologous recombinational DNA repair (RAD52) pathway. Required for synthesis-dependent strand annealing (SDSA) during double-strand break repair. Functionally, facilitates geminiviral replication (e.g. geminivirus mungbean yellow mosaic virus (MYMV) and tomato leaf curl virus (ToLCV)). This Arabidopsis thaliana (Mouse-ear cress) protein is Protein CHROMATIN REMODELING 25 (CHR25).